We begin with the raw amino-acid sequence, 307 residues long: Oxygen-dependent coproporphyrinogen-III oxidase (307 aa).

Ser-99 provides a ligand contact to substrate. A divalent metal cation contacts are provided by His-103 and His-113. Residue His-113 is the Proton donor of the active site. 115-117 (NVR) serves as a coordination point for substrate. Residues His-152 and His-182 each contribute to the a divalent metal cation site. The tract at residues 247-282 (YVEFNLVFDRGTLFGLQSGGRTESILMSMPPVVNWR) is important for dimerization. Residue 265–267 (GGR) participates in substrate binding.

This sequence belongs to the aerobic coproporphyrinogen-III oxidase family. As to quaternary structure, homodimer. A divalent metal cation serves as cofactor.

Its subcellular location is the cytoplasm. The enzyme catalyses coproporphyrinogen III + O2 + 2 H(+) = protoporphyrinogen IX + 2 CO2 + 2 H2O. The protein operates within porphyrin-containing compound metabolism; protoporphyrin-IX biosynthesis; protoporphyrinogen-IX from coproporphyrinogen-III (O2 route): step 1/1. Functionally, involved in the heme biosynthesis. Catalyzes the aerobic oxidative decarboxylation of propionate groups of rings A and B of coproporphyrinogen-III to yield the vinyl groups in protoporphyrinogen-IX. The protein is Oxygen-dependent coproporphyrinogen-III oxidase of Paraburkholderia phytofirmans (strain DSM 17436 / LMG 22146 / PsJN) (Burkholderia phytofirmans).